The following is a 446-amino-acid chain: MANLVLSECGIRPLPRIYTTPRSNFLSNNNKFRPSLSSSSYKTSSSPLSFGLNSRDGFTRNWALNVSTPLTTPIFEESPLEEDNKQRFDPGAPPPFNLADIRAAIPKHCWVKNPWKSLSYVVRDVAIVFALAAGAAYLNNWIVWPLYWLAQGTMFWALFVLGHDCGHGSFSNDPKLNSVVGHLLHSSILVPYHGWRISHRTHHQNHGHVENDESWHPMSEKIYNTLDKPTRFFRFTLPLVMLAYPFYLWARSPGKKGSHYHPDSDLFLPKERKDVLTSTACWTAMAALLVCLNFTIGPIQMLKLYGIPYWINVMWLDFVTYLHHHGHEDKLPWYRGKEWSYLRGGLTTLDRDYGLINNIHHDIGTHVIHHLFPQIPHYHLVEATEAAKPVLGKYYREPDKSGPLPLHLLEILAKSIKEDHYVSDEGEVVYYKADPNLYGEVKVRAD.

Residues M1–N65 constitute a chloroplast transit peptide. 2 helical membrane passes run L118–L138 and W141–L161. The Histidine box-1 signature appears at H163–H167. The Histidine box-2 signature appears at H199–H203. 3 consecutive transmembrane segments (helical) span residues R231–A250, T279–I299, and L302–L322. Positions H366–H370 match the Histidine box-3 motif.

It belongs to the fatty acid desaturase type 1 family. As to expression, most abundant in leaves and seedlings.

It is found in the plastid. Its subcellular location is the chloroplast inner membrane. It carries out the reaction a (7Z,10Z)-hexadecadienoyl-containing glycerolipid + 2 reduced [2Fe-2S]-[ferredoxin] + O2 + 2 H(+) = a (7Z,10Z,13Z)-hexadecatrienoyl-containing glycerolipid + 2 oxidized [2Fe-2S]-[ferredoxin] + 2 H2O. The enzyme catalyses a (9Z,12Z)-octadecadienoyl-containing glycerolipid + 2 reduced [2Fe-2S]-[ferredoxin] + O2 + 2 H(+) = (9Z,12Z,15Z)-octadecatrienoyl-containing glycerolipid + 2 oxidized [2Fe-2S]-[ferredoxin] + 2 H2O. It participates in lipid metabolism; polyunsaturated fatty acid biosynthesis. Chloroplast omega-3 fatty acid desaturase introduces the third double bond in the biosynthesis of 16:3 and 18:3 fatty acids, important constituents of plant membranes. It is thought to use ferredoxin as an electron donor and to act on fatty acids esterified to galactolipids, sulfolipids and phosphatidylglycerol. This is sn-2 acyl-lipid omega-3 desaturase (ferredoxin), chloroplastic from Arabidopsis thaliana (Mouse-ear cress).